A 505-amino-acid polypeptide reads, in one-letter code: MASGRRAPRTGLLELRAGAGSGAGGERWQRVLLSLAEDVLTVSPADGDPGPEPGAPREQEPAQLNGAAEPGAGPPQLPEALLLQRRRVTVRKADAGGLGISIKGGRENKMPILISKIFKGLAADQTEALFVGDAILSVNGEDLSSATHDEAVQVLKKTGKEVVLEVKYMKDVSPYFKNSTGGTSVGWDSPPASPLQRQPSSPGPTPRNFSEAKHMSLKMAYVSKRCTPNDPEPRYLEICSADGQDTLFLRAKDEASARSWATAIQAQVNTLTPRVKDELQALLAATSTAGSQDIKQIGWLTEQLPSGGTAPTLALLTEKELLLYLSLPETREALSRPARTAPLIATRLVHSGPSKGSVPYDAELSFALRTGTRHGVDTHLFSVESPQELAAWTRQLVDGCHRAAEGVQEVSTACTWNGRPCSLSVHIDKGFTLWAAEPGAARAVLLRQPFEKLQMSSDDGASLLFLDFGGAEGEIQLDLHSCPKTIVFIIHSFLSAKVTRLGLLA.

2 disordered regions span residues 1–25 and 40–77; these read MASGRRAPRTGLLELRAGAGSGAGG and LTVSPADGDPGPEPGAPREQEPAQLNGAAEPGAGPPQL. PH domains lie at 6-269 and 293-401; these read RAPR…AQVN and DIKQ…DGCH. The region spanning 87 to 170 is the PDZ domain; that stretch reads RVTVRKADAG…EVVLEVKYMK (84 aa). Residues Ser-101, Ser-184, Ser-189, Ser-193, and Ser-200 each carry the phosphoserine modification. The disordered stretch occupies residues 180–210; it reads TGGTSVGWDSPPASPLQRQPSSPGPTPRNFS. Residues 449–505 form the SU domain; that stretch reads PFEKLQMSSDDGASLLFLDFGGAEGEIQLDLHSCPKTIVFIIHSFLSAKVTRLGLLA. The tract at residues 483–505 is calmodulin-binding; the sequence is PKTIVFIIHSFLSAKVTRLGLLA.

The protein belongs to the syntrophin family. As to quaternary structure, monomer and homodimer. Interacts with the other members of the syntrophin family SNTB1 and SNTB2; SGCG and SGCA of the dystrophin glycoprotein complex; NOS1; GRB2; the sodium channel proteins SCN4A and SCN5A; F-actin and calmodulin. Interacts with dystrophin protein DMD and related proteins DTNA and UTRN and with MAPK12, TGFA and GA. Interacts with MYOC; regulates muscle hypertrophy. Interacts with DTNB. Post-translationally, phosphorylated by CaM-kinase II. Phosphorylation may inhibit the interaction with DMD. In terms of tissue distribution, high expression in skeletal muscle and heart. Low expression in brain, pancreas, liver, kidney and lung. Not detected in placenta.

It localises to the cell membrane. Its subcellular location is the sarcolemma. The protein resides in the cell junction. The protein localises to the cytoplasm. It is found in the cytoskeleton. Adapter protein that binds to and probably organizes the subcellular localization of a variety of membrane proteins. May link various receptors to the actin cytoskeleton and the extracellular matrix via the dystrophin glycoprotein complex. Plays an important role in synapse formation and in the organization of UTRN and acetylcholine receptors at the neuromuscular synapse. Binds to phosphatidylinositol 4,5-bisphosphate. In Homo sapiens (Human), this protein is Alpha-1-syntrophin (SNTA1).